The primary structure comprises 283 residues: Polyamine aminopropyltransferase (283 aa).

The region spanning 2 to 237 (ELWYTEEHTD…GHWLFGFASK (236 aa)) is the PABS domain. Q31 is a binding site for S-methyl-5'-thioadenosine. 2 residues coordinate spermidine: H62 and D86. S-methyl-5'-thioadenosine contacts are provided by residues E106 and 137-138 (DG). D155 (proton acceptor) is an active-site residue. 155 to 158 (DSTD) is a binding site for spermidine. P162 is an S-methyl-5'-thioadenosine binding site.

Belongs to the spermidine/spermine synthase family. In terms of assembly, homodimer or homotetramer.

It localises to the cytoplasm. It carries out the reaction S-adenosyl 3-(methylsulfanyl)propylamine + putrescine = S-methyl-5'-thioadenosine + spermidine + H(+). Its pathway is amine and polyamine biosynthesis; spermidine biosynthesis; spermidine from putrescine: step 1/1. Functionally, catalyzes the irreversible transfer of a propylamine group from the amino donor S-adenosylmethioninamine (decarboxy-AdoMet) to putrescine (1,4-diaminobutane) to yield spermidine. The protein is Polyamine aminopropyltransferase of Clostridium perfringens (strain ATCC 13124 / DSM 756 / JCM 1290 / NCIMB 6125 / NCTC 8237 / Type A).